Consider the following 757-residue polypeptide: Catalase-peroxidase (757 aa).

Positions 101–248 (WHSAGTYRIG…LAAVQMGLIY (148 aa)) form a cross-link, tryptophyl-tyrosyl-methioninium (Trp-Tyr) (with M-274). The active-site Proton acceptor is histidine 102. A disordered region spans residues 210-231 (SEGVHHPDEHSGAKEKASKNSD). A compositionally biased stretch (basic and acidic residues) spans 212-231 (GVHHPDEHSGAKEKASKNSD). The segment at residues 248–274 (YVNPEGPDGRPDPLASARDIRETFARM) is a cross-link (tryptophyl-tyrosyl-methioninium (Tyr-Met) (with W-101)). Residue histidine 289 participates in heme b binding. The tract at residues 293–312 (KTHGAAPADNVGPEPEAGEL) is disordered.

The protein belongs to the peroxidase family. Peroxidase/catalase subfamily. As to quaternary structure, homodimer or homotetramer. Heme b serves as cofactor. Post-translationally, formation of the three residue Trp-Tyr-Met cross-link is important for the catalase, but not the peroxidase activity of the enzyme.

The catalysed reaction is H2O2 + AH2 = A + 2 H2O. The enzyme catalyses 2 H2O2 = O2 + 2 H2O. Bifunctional enzyme with both catalase and broad-spectrum peroxidase activity. The protein is Catalase-peroxidase of Xylella fastidiosa (strain M12).